Reading from the N-terminus, the 122-residue chain is Large ribosomal subunit protein uL14c (122 aa).

Belongs to the universal ribosomal protein uL14 family. Part of the 50S ribosomal subunit.

The protein localises to the plastid. Its subcellular location is the chloroplast. In terms of biological role, binds to 23S rRNA. This is Large ribosomal subunit protein uL14c from Platanus occidentalis (Sycamore).